The sequence spans 343 residues: MSNTVFSGAVGPLRAAALSISRHRLPLLCAAGLGLTAVASWMWWRKRQGEAEDLQQVGIVSQLLIYPVKSCRAVPVQEAECSALGLKSGHLEDRHWLVVTEEGNMVTARQEPRMVLISATFCGNTLCLNGPEMQEVQIPLPLPKSNRVLDCRVFGQDIQGRDSGEQASEWLATYFQSSQPYRLVHFEADVMRPRQSKKKEKLFRDKDVIAYPDASPIMLLSETSMEALNSRLEQPVSLANFRPCIVASGCEAFAEDDWDDVRLGATRLKRVMACGRCVLTTVNPNSGVITRKEPLDTLRTFRQSDSSLKEVYKNAPLFGQYYGVEQTGIIRVGDPVYRVTRKG.

The Mitochondrial matrix segment spans residues 1-25 (MSNTVFSGAVGPLRAAALSISRHRL). A helical; Signal-anchor for type II membrane protein membrane pass occupies residues 26-44 (PLLCAAGLGLTAVASWMWW). The Cytoplasmic portion of the chain corresponds to 45–343 (RKRQGEAEDL…DPVYRVTRKG (299 aa)). Residues lysine 69, serine 70, and arginine 94 each contribute to the Mo-molybdopterin site. Positions 95–186 (HWLVVTEEGN…SSQPYRLVHF (92 aa)) are MOSC N-terminal region. Residues 181-339 (YRLVHFEADV…IRVGDPVYRV (159 aa)) form the MOSC domain. Mo-molybdopterin contacts are provided by serine 215, arginine 242, arginine 276, cysteine 277, and tyrosine 321.

Requires Mo-molybdopterin as cofactor.

It is found in the mitochondrion outer membrane. The protein localises to the membrane. The catalysed reaction is N(omega)-hydroxy-L-arginine + 2 Fe(II)-[cytochrome b5] + 2 H(+) = L-arginine + 2 Fe(III)-[cytochrome b5] + H2O. Catalyzes the reduction of N-oxygenated molecules, acting as a counterpart of cytochrome P450 and flavin-containing monooxygenases in metabolic cycles. As a component of prodrug-converting system, reduces a multitude of N-hydroxylated prodrugs particularly amidoximes, leading to increased drug bioavailability. May be involved in mitochondrial N(omega)-hydroxy-L-arginine (NOHA) reduction, regulating endogenous nitric oxide levels and biosynthesis. Postulated to cleave the N-OH bond of N-hydroxylated substrates in concert with electron transfer from NADH to cytochrome b5 reductase then to cytochrome b5, the ultimate electron donor that primes the active site for substrate reduction. The sequence is that of Mitochondrial amidoxime-reducing component 1 (mtarc1) from Xenopus laevis (African clawed frog).